The following is a 134-amino-acid chain: ATP synthase epsilon chain (134 aa).

The protein belongs to the ATPase epsilon chain family. As to quaternary structure, F-type ATPases have 2 components, CF(1) - the catalytic core - and CF(0) - the membrane proton channel. CF(1) has five subunits: alpha(3), beta(3), gamma(1), delta(1), epsilon(1). CF(0) has three main subunits: a, b and c.

It localises to the cellular thylakoid membrane. Its function is as follows. Produces ATP from ADP in the presence of a proton gradient across the membrane. The chain is ATP synthase epsilon chain from Prochlorococcus marinus (strain MIT 9301).